Here is a 439-residue protein sequence, read N- to C-terminus: Rhodopsin (439 aa).

An N-linked (GlcNAc...) asparagine glycan is attached at asparagine 1. Residues 1–26 (NETWWYNPYMDIHSHWKQFDQVPAAV) lie on the Extracellular side of the membrane. A helical transmembrane segment spans residues 27-51 (YYSLGIFIAICGIIGCAGNGIVIYL). Over 52–63 (FTKTKSLQTPAN) the chain is Cytoplasmic. A helical membrane pass occupies residues 64 to 90 (MFIINLAFSDFTFSLVNGFPMMTISCF). Residues 91–102 (LKHWVFGQAACK) lie on the Extracellular side of the membrane. Cysteine 101 and cysteine 179 are joined by a disulfide. A helical membrane pass occupies residues 103-124 (VYGLIGGIFGLTSIMTMTMISI). A 'Ionic lock' involved in activated form stabilization motif is present at residues 125 to 127 (DRY). Over 125 to 144 (DRYNVIRRPMSASKKMSHRK) the chain is Cytoplasmic. A helical transmembrane segment spans residues 145-165 (AFIMIVFVWIWSTIWAIGPIF). Residues 166-192 (GWGAYQLEGVLCNCSFDYITRDASTRS) are Extracellular-facing. A helical transmembrane segment spans residues 193–217 (NIVCMYIFAFMFPIVVIFFCYFNIV). Residues 218 to 254 (MSVSNHEKEMAAMAKRLNAKELRKAQAGASAEMKLAK) lie on the Cytoplasmic side of the membrane. A helical membrane pass occupies residues 255-276 (ISIVIVTQSLLSWSPYAIVALL). Topologically, residues 277-286 (AQFGPIEWVT) are extracellular. The chain crosses the membrane as a helical span at residues 287–308 (PYAAQLPVMFAKASAIHNPMIY). Lysine 298 is subject to N6-(retinylidene)lysine. Over 309-439 (SVSHPKFREA…PQAAPPQGVD (131 aa)) the chain is Cytoplasmic. 2 S-palmitoyl cysteine lipidation sites follow: cysteine 329 and cysteine 330. Residues 369–381 (MMQKMQAQQQQQP) show a composition bias toward low complexity. The disordered stretch occupies residues 369–439 (MMQKMQAQQQ…PQAAPPQGVD (71 aa)). Pro residues predominate over residues 382–433 (AYPPQGYPPQGYPPPPPQGYPPQGYPPQGYPPQGYPPPPQGPPPQGPPPQAA).

The protein belongs to the G-protein coupled receptor 1 family. Opsin subfamily. Post-translationally, contains one covalently linked retinal chromophore. Upon light absorption, the covalently bound 11-cis-retinal is converted to all-trans-retinal. After hydrolysis of the Schiff base and release of the covalently bound all-trans-retinal, active rhodopsin is regenerated by binding of a fresh molecule of 11-cis-retinal.

Its subcellular location is the cell projection. It localises to the rhabdomere membrane. Functionally, photoreceptor required for image-forming vision at low light intensity. Light-induced isomerization of 11-cis to all-trans retinal triggers a conformational change that activates signaling via G-proteins. Signaling mediates the activation of phospholipase C. Subsequent receptor phosphorylation mediates displacement of the bound G-protein alpha subunit by arrestin and terminates signaling. This chain is Rhodopsin (RHO), found in Alloteuthis subulata (Squid).